The following is a 427-amino-acid chain: Serine--tRNA ligase (427 aa).

236-238 (TAE) is a binding site for L-serine. 267-269 (RRE) contacts ATP. Position 290 (Glu-290) interacts with L-serine. Residue 354-357 (EISS) coordinates ATP. Position 390 (Ser-390) interacts with L-serine.

It belongs to the class-II aminoacyl-tRNA synthetase family. Type-1 seryl-tRNA synthetase subfamily. In terms of assembly, homodimer. The tRNA molecule binds across the dimer.

It is found in the cytoplasm. The catalysed reaction is tRNA(Ser) + L-serine + ATP = L-seryl-tRNA(Ser) + AMP + diphosphate + H(+). It carries out the reaction tRNA(Sec) + L-serine + ATP = L-seryl-tRNA(Sec) + AMP + diphosphate + H(+). Its pathway is aminoacyl-tRNA biosynthesis; selenocysteinyl-tRNA(Sec) biosynthesis; L-seryl-tRNA(Sec) from L-serine and tRNA(Sec): step 1/1. Catalyzes the attachment of serine to tRNA(Ser). Is also able to aminoacylate tRNA(Sec) with serine, to form the misacylated tRNA L-seryl-tRNA(Sec), which will be further converted into selenocysteinyl-tRNA(Sec). This chain is Serine--tRNA ligase, found in Rippkaea orientalis (strain PCC 8801 / RF-1) (Cyanothece sp. (strain PCC 8801)).